A 466-amino-acid polypeptide reads, in one-letter code: Chromogranin-A (466 aa).

Positions 1-18 (MRSSAALALLLCAGQVFA) are cleaved as a signal peptide. Cysteine 35 and cysteine 56 are joined by a disulfide. The segment at 91–443 (AQQQQQQQQQ…ANRRAEDQEL (353 aa)) is disordered. The span at 92-111 (QQQQQQQQQQQQQQQQQQQQ) shows a compositional bias: low complexity. Phosphoserine is present on serine 114. Positions 131–155 (KHGDAASEAPSKDTVEKREDSDKGQ) are enriched in basic and acidic residues. The segment covering 177 to 213 (ESSMMGNSQSPGEDTANNTQSPTSLPSQEHGIPQTTE) has biased composition (polar residues). Position 215 is a phosphoserine (serine 215). The span at 233–247 (KEEEEEEKEEEEEEK) shows a compositional bias: acidic residues. Residues 248–259 (EEKAIAREKAGP) are compositionally biased toward basic and acidic residues. Serine 288 and serine 312 each carry phosphoserine. Residues 305-314 (GKGELEHSQQ) show a composition bias toward basic and acidic residues. Glycine 332 carries the post-translational modification Glycine amide. Over residues 351-378 (RLSREWEDKRWSRMDQLAKELTAEKRLE) the composition is skewed to basic and acidic residues. Phosphoserine is present on residues serine 353 and serine 386. Methionine 387 bears the Methionine sulfoxide mark. The span at 412–440 (SSREDSVEARGDFEEKKEEEGSANRRAED) shows a compositional bias: basic and acidic residues. 3 positions are modified to phosphoserine: serine 413, serine 417, and serine 433. O-linked (Xyl...) (chondroitin sulfate) serine glycosylation is present at serine 433. Residue glutamine 441 is modified to Pyrrolidone carboxylic acid. The residue at position 447 (serine 447) is a Phosphoserine.

It belongs to the chromogranin/secretogranin protein family. As to quaternary structure, self-interacts; self-assembly is promoted in vitro by chondroitin sulfate attachment which occurs at mildly acidic pH conditions. Interacts with SCG3; this interaction is optimal in conditions mimicking the lumenal milieu of the trans-Golgi network, i.e. pH 5.5 and 10 mM Ca(+2). Interacts with ITPR1 in the secretory granules. O-glycosylated; contains chondroitin sulfate (CS). CS attachment is pH-dependent, being observed at mildly acidic conditions of pH 5 but not at neutral pH, and promotes self-assembly in vitro. Expressed in the brain and adrenal and pituitary glands.

It localises to the cytoplasmic vesicle. The protein resides in the secretory vesicle. Its subcellular location is the neuronal dense core vesicle. The protein localises to the secreted. In terms of biological role, strongly inhibits glucose induced insulin release from the pancreas. Catestatin inhibits catecholamine release from chromaffin cells and noradrenergic neurons by acting as a non-competitive nicotinic cholinergic antagonist. Can induce mast cell migration, degranulation and production of cytokines and chemokines. Functionally, serpinin regulates granule biogenesis in endocrine cells by up-regulating the transcription of protease nexin 1 (SERPINE2) via a cAMP-PKA-SP1 pathway. This leads to inhibition of granule protein degradation in the Golgi complex which in turn promotes granule formation. Serpinin and pGlu-serpinin can enhance both myocardial contractility (inotropy) and relaxation (lusitropy) and this cardio-stimulation requires a beta 1-adrenergic receptor/adenylate cyclase/cAMP/PKA pathway. This chain is Chromogranin-A (Chga), found in Rattus norvegicus (Rat).